We begin with the raw amino-acid sequence, 282 residues long: NADPH-dependent 7-cyano-7-deazaguanine reductase (282 aa).

88–90 (IES) contacts substrate. Residue 90–91 (SK) coordinates NADPH. The active-site Thioimide intermediate is the cysteine 190. Aspartate 197 (proton donor) is an active-site residue. 229–230 (HE) contacts substrate. NADPH is bound at residue 258–259 (RG).

It belongs to the GTP cyclohydrolase I family. QueF type 2 subfamily. As to quaternary structure, homodimer.

It localises to the cytoplasm. The enzyme catalyses 7-aminomethyl-7-carbaguanine + 2 NADP(+) = 7-cyano-7-deazaguanine + 2 NADPH + 3 H(+). It participates in tRNA modification; tRNA-queuosine biosynthesis. In terms of biological role, catalyzes the NADPH-dependent reduction of 7-cyano-7-deazaguanine (preQ0) to 7-aminomethyl-7-deazaguanine (preQ1). The protein is NADPH-dependent 7-cyano-7-deazaguanine reductase of Escherichia coli (strain UTI89 / UPEC).